We begin with the raw amino-acid sequence, 363 residues long: MAKNRNLVFFLGVLASFTLSSFPVTVSGEPPILFTFGDSSYDVGNTKFFSSEFDPATTWPYGDSIDDPSGRWSDGHIVPDFVGRLIGHREPIPPVLDPKADLSRGASFAIAGAVVLGSQSTTASMNFGQQISKFLELHKQWTDKERAEAIYMVNIGAEDYLNFAKAHPNANTVEQLTQVAHVLQRIPRELTSLYRAGGARKFAVQNLGPLGCLPIVRQEFKTGENCMEMVNFMVKTHNERLSRLLVAITVPLLYRGFRYSLFDFNGEILRRINEPSLHGYTDTTTSCCGTGSRNAYGCGYSNVHAKLCSYQKSFLFFDGRHNTEKTDEEVANLFYSGDKHVVSPMNIKDLVGKAATDLLAQEI.

The first 28 residues, 1 to 28 (MAKNRNLVFFLGVLASFTLSSFPVTVSG), serve as a signal peptide directing secretion. Ser-39 acts as the Nucleophile in catalysis. Residues Asp-318 and His-321 contribute to the active site.

This sequence belongs to the 'GDSL' lipolytic enzyme family.

It localises to the secreted. The chain is GDSL esterase/lipase At3g14220 from Arabidopsis thaliana (Mouse-ear cress).